A 379-amino-acid polypeptide reads, in one-letter code: Succinyl-diaminopimelate desuccinylase (379 aa).

Position 70 (His-70) interacts with Zn(2+). Asp-72 is a catalytic residue. Asp-103 serves as a coordination point for Zn(2+). Glu-137 (proton acceptor) is an active-site residue. Zn(2+) is bound by residues Glu-138, Glu-166, and His-352.

Belongs to the peptidase M20A family. DapE subfamily. As to quaternary structure, homodimer. Zn(2+) serves as cofactor. Co(2+) is required as a cofactor.

The catalysed reaction is N-succinyl-(2S,6S)-2,6-diaminopimelate + H2O = (2S,6S)-2,6-diaminopimelate + succinate. Its pathway is amino-acid biosynthesis; L-lysine biosynthesis via DAP pathway; LL-2,6-diaminopimelate from (S)-tetrahydrodipicolinate (succinylase route): step 3/3. Functionally, catalyzes the hydrolysis of N-succinyl-L,L-diaminopimelic acid (SDAP), forming succinate and LL-2,6-diaminopimelate (DAP), an intermediate involved in the bacterial biosynthesis of lysine and meso-diaminopimelic acid, an essential component of bacterial cell walls. This chain is Succinyl-diaminopimelate desuccinylase, found in Shewanella baltica (strain OS223).